The primary structure comprises 570 residues: Glucan 1,3-beta-glucosidase 2 (570 aa).

6 N-linked (GlcNAc...) asparagine glycosylation sites follow: Asn-91, Asn-116, Asn-121, Asn-184, Asn-203, and Asn-248. Catalysis depends on Glu-338, which acts as the Proton donor. Asn-364 is a glycosylation site (N-linked (GlcNAc...) asparagine). Glu-439 acts as the Nucleophile in catalysis. N-linked (GlcNAc...) asparagine glycosylation is found at Asn-525 and Asn-552.

This sequence belongs to the glycosyl hydrolase 5 (cellulase A) family.

It localises to the secreted. The enzyme catalyses Successive hydrolysis of beta-D-glucose units from the non-reducing ends of (1-&gt;3)-beta-D-glucans, releasing alpha-glucose.. The protein is Glucan 1,3-beta-glucosidase 2 (exg2) of Schizosaccharomyces pombe (strain 972 / ATCC 24843) (Fission yeast).